The chain runs to 152 residues: Pseudo histidine-containing phosphotransfer protein 5 (152 aa).

The 103-residue stretch at 38-140 (NPNFAEEVVS…ESYFQLLRQA (103 aa)) folds into the HPt domain.

In terms of biological role, functions as a two-component phosphorelay mediator between cytokinin sensor histidine kinases and response regulators (B-type ARRs). Plays an important role in propagating cytokinin signal transduction. This is Pseudo histidine-containing phosphotransfer protein 5 from Oryza sativa subsp. japonica (Rice).